The sequence spans 559 residues: MAMSLKKIGAIAVGGAMVASALASGVMAATTSGDVAGFMKNAIKEDGTPNVDIVVGSGAAVMDVVSAADVAAKIGSMAYKTGVVEDRSAVVKVSAKAESDDVNIFTLNATNEDIALVAAADSDYAKGFINGSDQLKVTDQLASGSIQDVNDADFNATSLGDVSTMLKVPDIDPSDWYSNDDDAGEVVFTRIVYDSDKLSIDEDQILYASIAYKNDEDVFNDNNTVTLKPGMRIPFLGEEYAVVKIDDEDDIIYLGKEAKDGVLKEGEXFAVGNGYEVKIASILKSGDTSTEYSVNVQILKDGKVVKEKTDTVGGSSSAQLKLAYKDVGVVVNDAWEDIAGTTGYAEVLITKDTKALELGEEYIPDWEAYAALNNSDKLEIKKDITESDKANIIGIALKYVGDKKKKLGDRDEVDIANYLKLVFDDEDKNDVLKVKFLMDESKEVTLDIGQKATVLNAEVRLKDILADAQQSVKLTAPIAKLDSEVSLDTADKNLILVGGPVVNALTKELVDAGKVAIDNTSPATLAVVEGAANGNDVLVVAGGDREATREAAKALLEMI.

A signal peptide spans 1-28 (MAMSLKKIGAIAVGGAMVASALASGVMA). N-linked (GlcNAc...) asparagine glycosylation is found at N108, N130, N155, N222, and N373.

Belongs to the Mj S-layer protein family.

The protein resides in the secreted. It is found in the cell wall. The protein localises to the S-layer. S-layer protein. The S-layer is a paracrystalline mono-layered assembly of proteins which coat the surface of the cell. In Methanothermococcus thermolithotrophicus (Methanococcus thermolithotrophicus), this protein is S-layer protein.